Consider the following 310-residue polypeptide: Homoserine kinase (310 aa).

91–101 provides a ligand contact to ATP; it reads PIGSGLGSSAC.

This sequence belongs to the GHMP kinase family. Homoserine kinase subfamily.

It is found in the cytoplasm. It catalyses the reaction L-homoserine + ATP = O-phospho-L-homoserine + ADP + H(+). The protein operates within amino-acid biosynthesis; L-threonine biosynthesis; L-threonine from L-aspartate: step 4/5. In terms of biological role, catalyzes the ATP-dependent phosphorylation of L-homoserine to L-homoserine phosphate. The polypeptide is Homoserine kinase (Escherichia coli O139:H28 (strain E24377A / ETEC)).